The primary structure comprises 106 residues: UPF0473 protein SSU98_0068 (106 aa).

This sequence belongs to the UPF0473 family.

In Streptococcus suis (strain 98HAH33), this protein is UPF0473 protein SSU98_0068.